Here is a 495-residue protein sequence, read N- to C-terminus: MTVMSGENVDEASAAPGHPQDGSYPRQADHDDHECCERVVINISGLRFETQLKTLAQFPNTLLGNPKKRMRYFDPLRNEYFFDRNRPSFDAILYYYQSGGRLRRPVNVPLDMFSEEIKFYELGEEAMEKFREDEGFIKEEERPLPEKEYQRQVWLLFEYPESSGPARVIAIVSVMVILISIVIFCLETLPELKDDKDFTGTVHRIDNTTVIYNSNIFTDPFFIVETLCIIWFSFELVVRFFACPSKTDFFKNIMNFIDIVAIIPYFITLGTEIAEQEGNQKGEQATSLAILRVIRLVRVFRIFKLSRHSKGLQILGQTLKASMRELGLLIFFLFIGVILFSSAVYFAEAEEAESHFSSIPDAFWWAVVSMTTVGYGDMYPVTIGGKIVGSLCAIAGVLTIALPVPVIVSNFNYFYHRETEGEEQAQLLHVSSPNLASDSDLSRRSSSTMSKSEYMEIEEDMNNSIAHYRQVNIRTANCTTANQNCVNKSKLLTDV.

The segment at 1–30 (MTVMSGENVDEASAAPGHPQDGSYPRQADH) is disordered. The tract at residues 1–128 (MTVMSGENVD…FYELGEEAME (128 aa)) is tetramerization domain. Residues 1–164 (MTVMSGENVD…LLFEYPESSG (164 aa)) are Cytoplasmic-facing. Ser23 is subject to Phosphoserine. A helical transmembrane segment spans residues 165–186 (PARVIAIVSVMVILISIVIFCL). The Extracellular segment spans residues 187 to 220 (ETLPELKDDKDFTGTVHRIDNTTVIYNSNIFTDP). Asn207 is a glycosylation site (N-linked (GlcNAc...) asparagine). A helical transmembrane segment spans residues 221–242 (FFIVETLCIIWFSFELVVRFFA). Cys243 carries S-palmitoyl cysteine lipidation. The Cytoplasmic segment spans residues 243 to 253 (CPSKTDFFKNI). A helical transmembrane segment spans residues 254-274 (MNFIDIVAIIPYFITLGTEIA). Residues 275–287 (EQEGNQKGEQATS) lie on the Extracellular side of the membrane. The chain crosses the membrane as a helical; Voltage-sensor span at residues 288-308 (LAILRVIRLVRVFRIFKLSRH). The Cytoplasmic portion of the chain corresponds to 309-323 (SKGLQILGQTLKASM). The S4-S5 linker stretch occupies residues 310 to 323 (KGLQILGQTLKASM). The residue at position 322 (Ser322) is a Phosphoserine; by PKA. A helical membrane pass occupies residues 324 to 345 (RELGLLIFFLFIGVILFSSAVY). Residues 346–359 (FAEAEEAESHFSSI) are Extracellular-facing. Positions 360-371 (PDAFWWAVVSMT) form an intramembrane region, helical. The Selectivity filter signature appears at 372-377 (TVGYGD). Residues 372–379 (TVGYGDMY) lie within the membrane without spanning it. Topologically, residues 380 to 386 (PVTIGGK) are extracellular. A helical membrane pass occupies residues 387–415 (IVGSLCAIAGVLTIALPVPVIVSNFNYFY). Topologically, residues 416–495 (HRETEGEEQA…VNKSKLLTDV (80 aa)) are cytoplasmic. 2 positions are modified to phosphoserine: Ser437 and Ser439. Residue Ser446 is modified to Phosphoserine; by PKA. Residues 493-495 (TDV) carry the PDZ-binding motif.

This sequence belongs to the potassium channel family. A (Shaker) (TC 1.A.1.2) subfamily. Kv1.1/KCNA1 sub-subfamily. As to quaternary structure, homotetramer and heterotetramer with other channel-forming alpha subunits, such as KCNA2, KCNA4, KCNA5, KCNA6 and KCNA7. Channel activity is regulated by interaction with the beta subunits KCNAB1 and KCNAB2. Identified in a complex with KCNA2 and KCNAB2. Interacts (via C-terminus) with the PDZ domains of DLG1, DLG2 and DLG4. Interacts with LGI1 within a complex containing LGI1, KCNA4 and KCNAB1. Interacts (via N-terminus) with STX1A; this promotes channel inactivation. Interacts (via N-terminus) with the heterodimer formed by GNB1 and GNG2; this promotes channel inactivation. Can interact simultaneously with STX1A and the heterodimer formed by GNB1 and GNG2. Interacts (via cytoplasmic N-terminal domain) with KCNRG; this inhibits channel activity. Interacts with ANK3; this inhibits channel activity. Interacts with ADAM11. In terms of processing, N-glycosylated. Palmitoylated on Cys-243; which may be required for membrane targeting. Post-translationally, phosphorylated on tyrosine residues. Phosphorylation increases in response to NRG1; this inhibits channel activity. Phosphorylation at Ser-446 regulates channel activity by down-regulating expression at the cell membrane. As to expression, detected adjacent to nodes of Ranvier in juxtaparanodal zones in spinal cord nerve fibers, but also in paranodal regions in some myelinated spinal cord axons (at protein level). Detected in the islet of Langerhans.

The protein localises to the cell membrane. Its subcellular location is the membrane. The protein resides in the cell projection. It is found in the axon. It localises to the cytoplasmic vesicle. The protein localises to the perikaryon. Its subcellular location is the endoplasmic reticulum. The protein resides in the dendrite. It is found in the cell junction. It localises to the synapse. The protein localises to the presynaptic cell membrane. Its subcellular location is the presynapse. The catalysed reaction is K(+)(in) = K(+)(out). Inhibited by 1.1 mM 4-aminopyridine (4-AP) and by 20 mM tetraethylammonium (TEA), but not by charybdotoxin (CTX). Inhibited by dendrotoxin (DTX). Its function is as follows. Voltage-gated potassium channel that mediates transmembrane potassium transport in excitable membranes, primarily in the brain and the central nervous system, but also in the kidney. Contributes to the regulation of the membrane potential and nerve signaling, and prevents neuronal hyperexcitability. Forms tetrameric potassium-selective channels through which potassium ions pass in accordance with their electrochemical gradient. The channel alternates between opened and closed conformations in response to the voltage difference across the membrane. Can form functional homotetrameric channels and heterotetrameric channels that contain variable proportions of KCNA1, KCNA2, KCNA4, KCNA5, KCNA6, KCNA7, and possibly other family members as well; channel properties depend on the type of alpha subunits that are part of the channel. Channel properties are modulated by cytoplasmic beta subunits that regulate the subcellular location of the alpha subunits and promote rapid inactivation of delayed rectifier potassium channels. In vivo, membranes probably contain a mixture of heteromeric potassium channel complexes, making it difficult to assign currents observed in intact tissues to any particular potassium channel family member. Homotetrameric KCNA1 forms a delayed-rectifier potassium channel that opens in response to membrane depolarization, followed by slow spontaneous channel closure. In contrast, a heterotetrameric channel formed by KCNA1 and KCNA4 shows rapid inactivation. Regulates neuronal excitability in hippocampus, especially in mossy fibers and medial perforant path axons, preventing neuronal hyperexcitability. Response to toxins that are selective for KCNA1, respectively for KCNA2, suggests that heteromeric potassium channels composed of both KCNA1 and KCNA2 play a role in pacemaking and regulate the output of deep cerebellar nuclear neurons. May function as down-stream effector for G protein-coupled receptors and inhibit GABAergic inputs to basolateral amygdala neurons. May contribute to the regulation of neurotransmitter release, such as gamma-aminobutyric acid (GABA) release. Plays a role in regulating the generation of action potentials and preventing hyperexcitability in myelinated axons of the vagus nerve, and thereby contributes to the regulation of heart contraction. Required for normal neuromuscular responses. Regulates the frequency of neuronal action potential firing in response to mechanical stimuli, and plays a role in the perception of pain caused by mechanical stimuli, but does not play a role in the perception of pain due to heat stimuli. Required for normal responses to auditory stimuli and precise location of sound sources, but not for sound perception. The use of toxins that block specific channels suggest that it contributes to the regulation of the axonal release of the neurotransmitter dopamine. Required for normal postnatal brain development and normal proliferation of neuronal precursor cells in the brain. Plays a role in the reabsorption of Mg(2+) in the distal convoluted tubules in the kidney and in magnesium ion homeostasis, probably via its effect on the membrane potential. This chain is Potassium voltage-gated channel subfamily A member 1, found in Homo sapiens (Human).